We begin with the raw amino-acid sequence, 235 residues long: Retron Ec48 transmembrane protein (235 aa).

2 helical membrane passes run 11–31 (IVGV…FETI) and 64–84 (AFGW…ALMT).

It localises to the cell inner membrane. Its function is as follows. Membrane component of antiviral defense system Retron Ec48, composed of a non-coding RNA (ncRNA), a reverse transcriptase (RT) and this membrane protein. Expression of this retron confers protection against bacteriophages lambda, T2, T4, T5 and T7. At multiplicity of infection (MOI) of 0.02 cultures grow normally when infected with lambda without collapsing, at MOI 2 cultures enter growth stasis. At MOI 3 cell membranes are permeabilized within 15 minutes of infection but do not lyse, suggesting the phage are not able to finish a replication cycle. Antiviral defense is suppressed by mutations that knockout the lambda gam expression or phage T7 gp5.9 expression; both viral genes inhibit host RecBCD. The Ec48 retron may sense the integrity of the RecBCD enzyme; when RecBCD is perturbed by viral proteins the Ec48 effector (the membrane protein) is activated, leading to abortive infection and bacterial growth arrest. The protein is Retron Ec48 transmembrane protein of Escherichia coli.